Here is a 211-residue protein sequence, read N- to C-terminus: Uracil phosphoribosyltransferase (211 aa).

Residues R78, R103, and 130 to 138 (DPMLATGGT) contribute to the 5-phospho-alpha-D-ribose 1-diphosphate site. Uracil contacts are provided by residues I195 and 200–202 (GDA). D201 is a binding site for 5-phospho-alpha-D-ribose 1-diphosphate.

Belongs to the UPRTase family. Requires Mg(2+) as cofactor.

It catalyses the reaction UMP + diphosphate = 5-phospho-alpha-D-ribose 1-diphosphate + uracil. The protein operates within pyrimidine metabolism; UMP biosynthesis via salvage pathway; UMP from uracil: step 1/1. With respect to regulation, allosterically activated by GTP. Catalyzes the conversion of uracil and 5-phospho-alpha-D-ribose 1-diphosphate (PRPP) to UMP and diphosphate. The chain is Uracil phosphoribosyltransferase from Streptomyces coelicolor (strain ATCC BAA-471 / A3(2) / M145).